The following is a 505-amino-acid chain: Maturase K (505 aa).

This sequence belongs to the intron maturase 2 family. MatK subfamily.

The protein localises to the plastid. It is found in the chloroplast. Functionally, usually encoded in the trnK tRNA gene intron. Probably assists in splicing its own and other chloroplast group II introns. This is Maturase K from Elaeagnus umbellata (Autumn olive).